The chain runs to 500 residues: NAD(P)H-quinone oxidoreductase chain 4, chloroplastic (500 aa).

The next 14 helical transmembrane spans lie at Phe4–Leu24, Leu37–Leu57, Gly84–Ala104, Ser111–Phe129, Leu134–Met154, Phe167–Leu187, Ala208–Ile228, His242–Val262, Ala272–Ala292, Ile305–Asp325, Gly330–Gly350, Leu386–Thr406, Ile416–Met436, and Phe462–Val482.

The protein belongs to the complex I subunit 4 family.

Its subcellular location is the plastid. It is found in the chloroplast thylakoid membrane. The catalysed reaction is a plastoquinone + NADH + (n+1) H(+)(in) = a plastoquinol + NAD(+) + n H(+)(out). The enzyme catalyses a plastoquinone + NADPH + (n+1) H(+)(in) = a plastoquinol + NADP(+) + n H(+)(out). This chain is NAD(P)H-quinone oxidoreductase chain 4, chloroplastic, found in Morus indica (Mulberry).